The chain runs to 615 residues: Probable ATP-citrate synthase subunit 1 (615 aa).

ATP is bound by residues 221–241 (LIRF…EVGG) and 272–298 (FKTE…KNQA). Glu-238 contacts Mg(2+). His-280 (tele-phosphohistidine intermediate) is an active-site residue. CoA is bound at residue 299–309 (MREAGIYVPET). A Phosphoserine modification is found at Ser-359.

The protein belongs to the succinate/malate CoA ligase alpha subunit family. In terms of assembly, composed of two subunits.

Its subcellular location is the cytoplasm. The catalysed reaction is oxaloacetate + acetyl-CoA + ADP + phosphate = citrate + ATP + CoA. In terms of biological role, catalyzes the formation of cytosolic acetyl-CoA, which is mainly used for the biosynthesis of fatty acids and sterols. The protein is Probable ATP-citrate synthase subunit 1 of Schizosaccharomyces pombe (strain 972 / ATCC 24843) (Fission yeast).